We begin with the raw amino-acid sequence, 353 residues long: Uroporphyrinogen decarboxylase (353 aa).

Residues 27–31 (RQAGR), F46, D76, Y152, S207, and H321 each bind substrate.

This sequence belongs to the uroporphyrinogen decarboxylase family. In terms of assembly, homodimer.

It localises to the cytoplasm. It carries out the reaction uroporphyrinogen III + 4 H(+) = coproporphyrinogen III + 4 CO2. It functions in the pathway porphyrin-containing compound metabolism; protoporphyrin-IX biosynthesis; coproporphyrinogen-III from 5-aminolevulinate: step 4/4. Functionally, catalyzes the decarboxylation of four acetate groups of uroporphyrinogen-III to yield coproporphyrinogen-III. The polypeptide is Uroporphyrinogen decarboxylase (Listeria monocytogenes serovar 1/2a (strain ATCC BAA-679 / EGD-e)).